Consider the following 243-residue polypeptide: Probable glycerol uptake facilitator protein (243 aa).

The next 2 membrane-spanning stretches (helical) occupy residues Ile7 to Ala27 and Leu44 to Val64. An NPA 1 motif is present at residues Asn72–Ala74. A run of 3 helical transmembrane segments spans residues Ile88–Ile108, Ile143–His163, and Thr166–Ile186. An NPA 2 motif is present at residues Asn187–Ala189. The chain crosses the membrane as a helical span at residues Leu221 to Ile241.

The protein belongs to the MIP/aquaporin (TC 1.A.8) family.

The protein resides in the cell membrane. The enzyme catalyses glycerol(in) = glycerol(out). In terms of biological role, mediates glycerol diffusion across the cytoplasmic membrane via a pore-type mechanism. The protein is Probable glycerol uptake facilitator protein (glpF) of Mycoplasmoides gallisepticum (strain R(low / passage 15 / clone 2)) (Mycoplasma gallisepticum).